Reading from the N-terminus, the 269-residue chain is Expansin-A32 (269 aa).

A signal peptide spans 1–25 (MWCTWALGRVVLAVVFLVALAAGDA). The 115-residue stretch at 60 to 174 (DGACGYKDTS…RRVPCVKVGG (115 aa)) folds into the Expansin-like EG45 domain. One can recognise an Expansin-like CBD domain in the interval 184-264 (YFNLVMVSNV…DWQFGVTYQA (81 aa)).

The protein belongs to the expansin family. Expansin A subfamily.

It localises to the secreted. The protein resides in the cell wall. Its subcellular location is the membrane. Functionally, may cause loosening and extension of plant cell walls by disrupting non-covalent bonding between cellulose microfibrils and matrix glucans. No enzymatic activity has been found. May be required for rapid internodal elongation in deepwater rice during submergence. The polypeptide is Expansin-A32 (EXPA32) (Oryza sativa subsp. japonica (Rice)).